A 608-amino-acid chain; its full sequence is Formate hydrogenlyase subunit 3 (608 aa).

12 consecutive transmembrane segments (helical) span residues 10-26, 44-67, 76-93, 116-140, 153-173, 197-218, 229-251, 258-280, 296-312, 416-440, 453-476, and 502-521; these read GVAW…LFSF, LYTA…LSLV, LNAI…FVSL, AAAV…MALC, LWFA…WLLW, IWLL…HGWV, AAAL…LSLL, WWGI…YALV, IGII…GIAL, LAVG…VTFL, CAPL…GVAA, and MITL…MAIC.

It belongs to the complex I subunit 4 family. FHL comprises of a formate dehydrogenase, unidentified electron carriers and a hydrogenase (isoenzyme 3). In this non-energy conserving pathway molecular hydrogen and carbodioxide from formate are released.

The protein resides in the cell inner membrane. The protein is Formate hydrogenlyase subunit 3 (hycC) of Escherichia coli (strain K12).